Consider the following 190-residue polypeptide: Ferric nitrobindin-like protein (190 aa).

The GXWXGXG motif lies at Gly20–Gly26.

The protein belongs to the nitrobindin family.

The protein is Ferric nitrobindin-like protein of Streptomyces griseus subsp. griseus (strain JCM 4626 / CBS 651.72 / NBRC 13350 / KCC S-0626 / ISP 5235).